Here is a 154-residue protein sequence, read N- to C-terminus: Peptide deformylase (154 aa).

Fe cation-binding residues include Cys90 and His132. Residue Glu133 is part of the active site. His136 is a binding site for Fe cation.

This sequence belongs to the polypeptide deformylase family. Fe(2+) is required as a cofactor.

The enzyme catalyses N-terminal N-formyl-L-methionyl-[peptide] + H2O = N-terminal L-methionyl-[peptide] + formate. In terms of biological role, removes the formyl group from the N-terminal Met of newly synthesized proteins. Requires at least a dipeptide for an efficient rate of reaction. N-terminal L-methionine is a prerequisite for activity but the enzyme has broad specificity at other positions. The chain is Peptide deformylase from Halothermothrix orenii (strain H 168 / OCM 544 / DSM 9562).